Here is an 881-residue protein sequence, read N- to C-terminus: DNA mismatch repair protein MutS (881 aa).

ATP is bound at residue G605–S612.

Belongs to the DNA mismatch repair MutS family.

In terms of biological role, this protein is involved in the repair of mismatches in DNA. It is possible that it carries out the mismatch recognition step. This protein has a weak ATPase activity. The polypeptide is DNA mismatch repair protein MutS (Limosilactobacillus reuteri subsp. reuteri (strain JCM 1112) (Lactobacillus reuteri)).